We begin with the raw amino-acid sequence, 298 residues long: Interferon-inducible double-stranded RNA-dependent protein kinase activator A homolog B (298 aa).

3 DRBM domains span residues 20–87, 112–180, and 225–293; these read TPIQ…ILRG, NPVG…KFKT, and DYVK…YLKI.

The protein belongs to the PRKRA family. As to quaternary structure, homodimer. Interacts with dicer1 and eif2ak2/pkr. Also able to interact with dsRNA. Associates with ribosomes. As to expression, expressed in brain, heart, kidney, liver, nerve and spleen.

Its subcellular location is the cytoplasm. It localises to the perinuclear region. The protein resides in the nucleus. The protein localises to the nucleolus. Activates eif2ak2/pkr in the absence of double-stranded RNA (dsRNA), leading to phosphorylation of eif2s1/efi2-alpha and inhibition of translation and induction of apoptosis. Required for siRNA production by dicer1 and for subsequent siRNA-mediated post-transcriptional gene silencing. Does not seem to be required for processing of pre-miRNA to miRNA by dicer1. This Xenopus laevis (African clawed frog) protein is Interferon-inducible double-stranded RNA-dependent protein kinase activator A homolog B (prkra-b).